Here is a 377-residue protein sequence, read N- to C-terminus: Opsin-5 (377 aa).

Over 1–33 (MALNHTALPQDERLPHYLRDEDPFASKLSWEAD) the chain is Extracellular. An N-linked (GlcNAc...) asparagine glycan is attached at N4. The chain crosses the membrane as a helical span at residues 34–54 (LVAGFYLTIIGILSTFGNGYV). Residues 55-74 (LYMSSRRKKKLRPAEIMTIN) are Cytoplasmic-facing. Residues 75–95 (LAVCDLGISVVGKPFTIISCF) traverse the membrane as a helical segment. Residues 96–108 (CHRWVFGWFGCRW) lie on the Extracellular side of the membrane. Cysteines 106 and 183 form a disulfide. Residues 109 to 129 (YGWAGFFFGCGSLITMTAVSL) form a helical membrane-spanning segment. The Cytoplasmic portion of the chain corresponds to 130-150 (DRYLKICYLSYGVWLKRKHAY). A helical transmembrane segment spans residues 151 to 171 (ICLAVIWAYASFWTTMPLVGL). Topologically, residues 172–197 (GDYAPEPFGTSCTLDWWLAQASGGGQ) are extracellular. A helical transmembrane segment spans residues 198–218 (VFILSILFFCLLLPTAVIVFS). Over 219 to 252 (YAKIIAKVKSSSKEVAHFDSRIHSSHVLEVKLTK) the chain is Cytoplasmic. Residues 253 to 273 (VAMLICAGFLIAWIPYAVVSV) traverse the membrane as a helical segment. Residues 274-288 (WSAFGRPDSIPIQLS) are Extracellular-facing. The chain crosses the membrane as a helical span at residues 289–309 (VVPTLLAKSAAMYNPIIYQVI). K296 bears the N6-(retinylidene)lysine mark. Topologically, residues 310–377 (DYRFACCQAG…HSNDGDCGKK (68 aa)) are cytoplasmic. 2 S-palmitoyl cysteine lipidation sites follow: C315 and C316. The interval 357–377 (FTSAHVMDGESHSNDGDCGKK) is disordered. Basic and acidic residues predominate over residues 363–377 (MDGESHSNDGDCGKK).

Belongs to the G-protein coupled receptor 1 family. Opsin subfamily. In terms of processing, it is uncertain whether Cys-315 or Cys-316 is palmitoylated. As to expression, expressed in the brain (at protein level). Weakly expressed in the skin and liver (at protein level). Abundantly expressed in striated muscle cells. Expressed in Math7/Atok7-dependent retinal ganglion cells in the ganglion cell layer (at protein level). Additionally expressed in horizontal and amacrine cells in the inner nuclear layer of the retina (at protein level). Expressed around the base of hair follicles and in epidermal and sebaceous gland cells of the outer ear (at protein level). Abundantly expressed in vibrissae hair follicles and weakly expressed in the vibrissae skin pad, dorsal back skin, and tail.

Its subcellular location is the cell membrane. Its function is as follows. G-protein coupled receptor which selectively activates G(i) type G proteins via ultraviolet A (UVA) light-mediated activation in the retina. Preferentially binds the chromophore 11-cis retinal and is a bistable protein that displays emission peaks at 380 nm (UVA light) and 470 nm (blue light). Required for the light-response in the inner plexiform layer, and contributes to the regulation of the light-response in the nerve fiber layer, via phosphorylated DAT/SLC6A3 dopamine uptake. Involved in local corneal and retinal circadian rhythm photoentrainment via modulation of the UVA light-induced phase-shift of the retina clock. Acts as a circadian photoreceptor in the outer ear and vibrissal pads, via modulation of circadian clock-gene expression in response to violet light during the light-to-dark transition phase and night phase of the circadian cycle. Required in the retina to negatively regulate hyaloid vessel regression during postnatal development via light-dependent OPN5-SLC32A1-DRD2-VEGFR2 signaling. Involved in the light-dependent regulation of retina and vitreous compartment dopamine levels. The sequence is that of Opsin-5 (Opn5) from Mus musculus (Mouse).